A 474-amino-acid polypeptide reads, in one-letter code: Hepatocyte nuclear factor 4-alpha (474 aa).

A DNA-binding region (nuclear receptor) is located at residues 57–132; it reads SALCAICGDR…AGMKKEAVQN (76 aa). NR C4-type zinc fingers lie at residues 60–80 and 96–120; these read CAICGDRATGKHYGASSCDGC and CRFSRQCVVDKDKRNQCRYCRLKKC. Ser-142 and Ser-143 each carry phosphoserine; by PKA. Residue Tyr-144 is modified to Phosphotyrosine. The 231-residue stretch at 147–377 folds into the NR LBD domain; that stretch reads SSLPSINALL…NLLQEMLLGG (231 aa). Thr-166 carries the phosphothreonine modification. The residue at position 167 (Ser-167) is a Phosphoserine. Residues Lys-234 and Lys-307 each participate in a glycyl lysine isopeptide (Lys-Gly) (interchain with G-Cter in ubiquitin) cross-link. Phosphoserine; by AMPK is present on Ser-313. The 9aaTAD signature appears at 368-376; it reads NLLQEMLLG. Residues 413-450 are disordered; that stretch reads SNGQMCEWPRPRGQAATPETPQPSPPSGSGSESYKLLP. A phosphothreonine mark is found at Thr-429 and Thr-432. Residue Ser-436 is modified to Phosphoserine. The residue at position 458 (Lys-458) is an N6-acetyllysine.

It belongs to the nuclear hormone receptor family. NR2 subfamily. In terms of assembly, homodimerization is required for HNF4-alpha to bind to its recognition site. Interacts with CLOCK, BMAL1, CRY1, CRY2, PER1 and PER2. Interacts with NR0B2/SHP; the resulting heterodimer is transcriptionally inactive. Interacts with DDX3X; this interaction disrupts the interaction between HNF4 and NR0B2 that forms inactive heterodimers and enhances the formation of active HNF4 homodimers. Post-translationally, phosphorylation at Ser-313 by AMPK reduces the ability to form homodimers and bind DNA. Phosphorylated in the recognition sequence R-R-S-S near the DNA-binding domain; phosphorylation results in decrease in DNA-binding activity. Phosphorylation of HNF4 depends on the diet and is decreased by a carbohydrate-rich diet and is increased by fasting. In terms of processing, the N-terminus is blocked. Acetylation at Lys-458 lowers transcriptional activation by about two-fold. In terms of tissue distribution, liver, kidney and intestine.

The protein localises to the nucleus. In terms of biological role, transcriptional regulator which controls the expression of hepatic genes during the transition of endodermal cells to hepatic progenitor cells, facilitating the recruitment of RNA pol II to the promoters of target genes. Activates the transcription of CYP2C38. Represses the CLOCK-BMAL1 transcriptional activity and is essential for circadian rhythm maintenance and period regulation in the liver and colon cells. The sequence is that of Hepatocyte nuclear factor 4-alpha (Hnf4a) from Rattus norvegicus (Rat).